Consider the following 226-residue polypeptide: Methylamine utilization ferredoxin-type protein MauM (226 aa).

4Fe-4S ferredoxin-type domains are found at residues 59–87, 95–127, 136–172, and 180–211; these read PEPE…LASW, TPYF…PLLT, VAVL…LKQI, and QIPT…LLPR. The [4Fe-4S] cluster site is built by C67, C70, C73, C77, C105, C108, C113, C117, C145, C153, C156, C160, C189, C192, C195, and C199.

It participates in one-carbon metabolism; methylamine degradation. Its function is as follows. Involved in electron transfer. The sequence is that of Methylamine utilization ferredoxin-type protein MauM (mauM) from Methylophilus methylotrophus (Bacterium W3A1).